The chain runs to 510 residues: Bifunctional pantoate ligase/cytidylate kinase (510 aa).

The tract at residues Met1–Val276 is pantoate--beta-alanine ligase. Met29–His36 is an ATP binding site. His36 functions as the Proton donor in the catalytic mechanism. A (R)-pantoate-binding site is contributed by Gln61. Gln61 contributes to the beta-alanine binding site. Residue Gly150 to Asp153 participates in ATP binding. Residue Gln156 participates in (R)-pantoate binding. Leu187–Arg190 provides a ligand contact to ATP. Residues Phe277–Lys510 are cytidylate kinase.

This sequence in the N-terminal section; belongs to the pantothenate synthetase family. It in the C-terminal section; belongs to the cytidylate kinase family. Type 1 subfamily.

It is found in the cytoplasm. The catalysed reaction is (R)-pantoate + beta-alanine + ATP = (R)-pantothenate + AMP + diphosphate + H(+). It carries out the reaction CMP + ATP = CDP + ADP. The enzyme catalyses dCMP + ATP = dCDP + ADP. The protein operates within cofactor biosynthesis; (R)-pantothenate biosynthesis; (R)-pantothenate from (R)-pantoate and beta-alanine: step 1/1. In terms of biological role, catalyzes the condensation of pantoate with beta-alanine in an ATP-dependent reaction via a pantoyl-adenylate intermediate. Its function is as follows. Catalyzes the transfer of a phosphate group from ATP to either CMP or dCMP to form CDP or dCDP and ADP, respectively. The protein is Bifunctional pantoate ligase/cytidylate kinase of Prochlorococcus marinus (strain MIT 9215).